A 506-amino-acid polypeptide reads, in one-letter code: Maturase K (506 aa).

This sequence belongs to the intron maturase 2 family. MatK subfamily.

It localises to the plastid. It is found in the chloroplast. In terms of biological role, usually encoded in the trnK tRNA gene intron. Probably assists in splicing its own and other chloroplast group II introns. The chain is Maturase K from Styphnolobium japonicum (Japanese pagoda tree).